The sequence spans 102 residues: NADH-quinone oxidoreductase subunit K 1 (102 aa).

A run of 3 helical transmembrane segments spans residues 5–25, 30–50, and 65–85; these read FEHVLILAGILFALGLVCVLV, LIMLLIGIEVMLNAAMLAFVG, and LVIMALTSAEVSLALAMVVYL.

This sequence belongs to the complex I subunit 4L family. NDH-1 is composed of 14 different subunits. Subunits NuoA, H, J, K, L, M, N constitute the membrane sector of the complex.

It is found in the cell inner membrane. It carries out the reaction a quinone + NADH + 5 H(+)(in) = a quinol + NAD(+) + 4 H(+)(out). Its function is as follows. NDH-1 shuttles electrons from NADH, via FMN and iron-sulfur (Fe-S) centers, to quinones in the respiratory chain. The immediate electron acceptor for the enzyme in this species is believed to be ubiquinone. Couples the redox reaction to proton translocation (for every two electrons transferred, four hydrogen ions are translocated across the cytoplasmic membrane), and thus conserves the redox energy in a proton gradient. This Geobacter metallireducens (strain ATCC 53774 / DSM 7210 / GS-15) protein is NADH-quinone oxidoreductase subunit K 1.